We begin with the raw amino-acid sequence, 497 residues long: Protein nucleotidyltransferase YdiU (497 aa).

The ATP site is built by Gly92, Gly94, Arg95, Lys114, Asp126, Gly127, Arg177, and Arg184. The active-site Proton acceptor is the Asp261. Asn262 and Asp271 together coordinate Mg(2+). Position 271 (Asp271) interacts with ATP.

The protein belongs to the SELO family. Requires Mg(2+) as cofactor. It depends on Mn(2+) as a cofactor.

It catalyses the reaction L-seryl-[protein] + ATP = 3-O-(5'-adenylyl)-L-seryl-[protein] + diphosphate. The catalysed reaction is L-threonyl-[protein] + ATP = 3-O-(5'-adenylyl)-L-threonyl-[protein] + diphosphate. It carries out the reaction L-tyrosyl-[protein] + ATP = O-(5'-adenylyl)-L-tyrosyl-[protein] + diphosphate. The enzyme catalyses L-histidyl-[protein] + UTP = N(tele)-(5'-uridylyl)-L-histidyl-[protein] + diphosphate. It catalyses the reaction L-seryl-[protein] + UTP = O-(5'-uridylyl)-L-seryl-[protein] + diphosphate. The catalysed reaction is L-tyrosyl-[protein] + UTP = O-(5'-uridylyl)-L-tyrosyl-[protein] + diphosphate. Functionally, nucleotidyltransferase involved in the post-translational modification of proteins. It can catalyze the addition of adenosine monophosphate (AMP) or uridine monophosphate (UMP) to a protein, resulting in modifications known as AMPylation and UMPylation. The polypeptide is Protein nucleotidyltransferase YdiU (Bordetella petrii (strain ATCC BAA-461 / DSM 12804 / CCUG 43448)).